The sequence spans 351 residues: Photosystem II D2 protein (351 aa).

Residues 39–59 (CAFLALGGWLTGTTFVTSWYT) form a helical membrane-spanning segment. H116 contributes to the chlorophyll a binding site. Residues 123–139 (GFMLRQFEIARLVGIRP) traverse the membrane as a helical segment. Residues Q128 and N141 each coordinate pheophytin a. Residues 151-164 (VFVSVFLMYPLGQS) traverse the membrane as a helical segment. H196 contributes to the chlorophyll a binding site. A helical transmembrane segment spans residues 206 to 226 (GALLCAIHGATVENTLFEDGE). Residues H213 and F260 each coordinate a plastoquinone. H213 provides a ligand contact to Fe cation. Residue H267 participates in Fe cation binding. The helical transmembrane segment at 277–293 (GLWMSAVGIVGLALNLR) threads the bilayer.

The protein belongs to the reaction center PufL/M/PsbA/D family. PSII is composed of 1 copy each of membrane proteins PsbA, PsbB, PsbC, PsbD, PsbE, PsbF, PsbH, PsbI, PsbJ, PsbK, PsbL, PsbM, PsbT, PsbX, PsbY, PsbZ, Psb30/Ycf12, peripheral proteins PsbO, CyanoQ (PsbQ), PsbU, PsbV and a large number of cofactors. It forms dimeric complexes. The cofactor is The D1/D2 heterodimer binds P680, chlorophylls that are the primary electron donor of PSII, and subsequent electron acceptors. It shares a non-heme iron and each subunit binds pheophytin, quinone, additional chlorophylls, carotenoids and lipids. There is also a Cl(-1) ion associated with D1 and D2, which is required for oxygen evolution. The PSII complex binds additional chlorophylls, carotenoids and specific lipids..

The protein localises to the cellular thylakoid membrane. It catalyses the reaction 2 a plastoquinone + 4 hnu + 2 H2O = 2 a plastoquinol + O2. Photosystem II (PSII) is a light-driven water:plastoquinone oxidoreductase that uses light energy to abstract electrons from H(2)O, generating O(2) and a proton gradient subsequently used for ATP formation. It consists of a core antenna complex that captures photons, and an electron transfer chain that converts photonic excitation into a charge separation. The D1/D2 (PsbA/PsbD) reaction center heterodimer binds P680, the primary electron donor of PSII as well as several subsequent electron acceptors. D2 is needed for assembly of a stable PSII complex. The polypeptide is Photosystem II D2 protein (Trichormus variabilis (strain ATCC 29413 / PCC 7937) (Anabaena variabilis)).